A 152-amino-acid chain; its full sequence is Small ribosomal subunit protein uS13 (152 aa).

Belongs to the universal ribosomal protein uS13 family.

It localises to the cytoplasm. Its function is as follows. Located at the top of the head of the 40S subunit, it contacts several helices of the 18S rRNA. The polypeptide is Small ribosomal subunit protein uS13 (RPS18) (Branchiostoma belcheri (Amphioxus)).